The following is a 447-amino-acid chain: MAQTDILLTKEPAPQTVPACQLPRKLYDVARNTGAHTSSGLATSGFRTAKYLLDEWFQNCYARYHQAFADRDQSERQRHESQQLAAETEALAQRTQQDSTRKVGERLQDMHGWKSELQRQVEELVSETELLLAQKQRLERALDATAGPFSIVTDNLQCRERRQHPDLVRDCVEIELLKEAELIRNIQELLKRTIKQAVSQIRLNWEHKETCEMDWSDKVEAYNIDEACCRYNNQSTDVQFYPHSAKFEESASTPETWAKFTQEHLYRAERERLASVNLRNLIDCILQDTSEDLRLQCDAVNLAFGRRCEELEDARHKLEHHLRKTLREISDQEHNIAALKQAIKDKEAPLKVAQTRLYQRSHRPNVELCRDAAQFRLASEVEELNLSLAALKEKLLEAEQSLRNLEDTRMSLEKDIAIKTNSLFIDRHKCMAHRAHYPTVLQLAGYQ.

2 coiled-coil regions span residues 69-144 (ADRD…ALDA) and 304-423 (FGRR…TNSL). The segment covering 72-81 (DQSERQRHES) has biased composition (basic and acidic residues). A disordered region spans residues 72–104 (DQSERQRHESQQLAAETEALAQRTQQDSTRKVG). Positions 82–97 (QQLAAETEALAQRTQQ) are enriched in low complexity.

Belongs to the tektin family. As to quaternary structure, microtubule inner protein component of sperm flagellar doublet microtubules. Ubiquitinated, leading to its degradation. Deubiquitinated by USP16, promoting its stability. In terms of tissue distribution, expressed in trachea multiciliated cells.

Its subcellular location is the cytoplasm. The protein localises to the cytoskeleton. The protein resides in the cilium axoneme. It is found in the flagellum axoneme. Microtubule inner protein (MIP) part of the dynein-decorated doublet microtubules (DMTs) in cilia and flagellar axoneme. Forms filamentous polymers in the walls of ciliary and flagellar microtubules. Contributes to normal sperm motility. This chain is Tektin-4 (TEKT4), found in Bos taurus (Bovine).